A 284-amino-acid polypeptide reads, in one-letter code: Nucleotide-binding protein Sbal223_0704 (284 aa).

Residue 8 to 15 coordinates ATP; the sequence is GRSGSGKS. GTP is bound at residue 56-59; it reads DVRN.

This sequence belongs to the RapZ-like family.

Its function is as follows. Displays ATPase and GTPase activities. The chain is Nucleotide-binding protein Sbal223_0704 from Shewanella baltica (strain OS223).